The primary structure comprises 529 residues: Ribonuclease Y (529 aa).

Residues 4–24 (GLIYISLEVLVACLITALIMY) form a helical membrane-spanning segment. A KH domain is found at 216-297 (LTTRIALPCS…NRIEEVYHRV (82 aa)). The HD domain occupies 342–435 (ALQHSKEVAL…VCAADALSAG (94 aa)).

The protein belongs to the RNase Y family.

The protein localises to the cell membrane. Endoribonuclease that initiates mRNA decay. This chain is Ribonuclease Y, found in Helicobacter pylori (strain HPAG1).